Consider the following 503-residue polypeptide: Maturase K (503 aa).

It belongs to the intron maturase 2 family. MatK subfamily.

It is found in the plastid. Its subcellular location is the chloroplast. In terms of biological role, usually encoded in the trnK tRNA gene intron. Probably assists in splicing its own and other chloroplast group II introns. In Kunzea pulchella (Red kunzea), this protein is Maturase K.